The primary structure comprises 329 residues: Mas-related G-protein coupled receptor member X2 (329 aa).

Topologically, residues 1–33 (MDPTTPAWGTESTTMNGNDQALPLLCGKETMIS) are extracellular. Residues 34 to 54 (VFLILFIALVGLVGNAFVLWL) form a helical membrane-spanning segment. At 55–63 (LGFRMRRNA) the chain is on the cytoplasmic side. The helical transmembrane segment at 64–84 (FSVYVLSLAGADFLFLCFQMT) threads the bilayer. Residues 85-96 (SCLAYLINFFGS) lie on the Extracellular side of the membrane. A helical transmembrane segment spans residues 97–116 (ISINIPSFFTVMTCAYLAGL). Residues 117–143 (SMLSAISTERCLSVLWPIWYRCRRPRH) lie on the Cytoplasmic side of the membrane. The chain crosses the membrane as a helical span at residues 144 to 164 (LSAVMCVLLWALSLLLSILEG). Topologically, residues 165 to 183 (KFCGFLFSDDDPGWCQTFD) are extracellular. Residues 184–204 (FITAAWLMFLFVVLCGSSLAL) form a helical membrane-spanning segment. The Cytoplasmic segment spans residues 205 to 227 (LVRILCGSRSLPLTRLYLTILLT). The helical transmembrane segment at 228 to 248 (VLIFLLCGLPFGIQWFLILWI) threads the bilayer. Over 249–263 (WKNSVVLFCHIHPIS) the chain is Extracellular. The chain crosses the membrane as a helical span at residues 264–284 (VVLSSFNSSANPIIYFFVGSF). The Cytoplasmic portion of the chain corresponds to 285–329 (RKQWRLRQPILKLALQRALQDTAEVDHSEGCFSQGTLEMSRSSLV).

Belongs to the G-protein coupled receptor 1 family. Mas subfamily.

It is found in the cell membrane. Functionally, mast cell-specific receptor for basic secretagogues, i.e. cationic amphiphilic drugs, as well as endo- or exogenous peptides, consisting of a basic head group and a hydrophobic core. Recognizes and binds small molecules containing a cyclized tetrahydroisoquinoline (THIQ), such as non-steroidal neuromuscular blocking drugs (NMBDs), including tubocurarine and atracurium. In response to these compounds, mediates pseudo-allergic reactions characterized by histamine release, inflammation and airway contraction. This chain is Mas-related G-protein coupled receptor member X2 (MRGPRX2), found in Macaca mulatta (Rhesus macaque).